The following is a 95-amino-acid chain: Aspartyl/glutamyl-tRNA(Asn/Gln) amidotransferase subunit C (95 aa).

This sequence belongs to the GatC family. In terms of assembly, heterotrimer of A, B and C subunits.

It carries out the reaction L-glutamyl-tRNA(Gln) + L-glutamine + ATP + H2O = L-glutaminyl-tRNA(Gln) + L-glutamate + ADP + phosphate + H(+). The enzyme catalyses L-aspartyl-tRNA(Asn) + L-glutamine + ATP + H2O = L-asparaginyl-tRNA(Asn) + L-glutamate + ADP + phosphate + 2 H(+). Its function is as follows. Allows the formation of correctly charged Asn-tRNA(Asn) or Gln-tRNA(Gln) through the transamidation of misacylated Asp-tRNA(Asn) or Glu-tRNA(Gln) in organisms which lack either or both of asparaginyl-tRNA or glutaminyl-tRNA synthetases. The reaction takes place in the presence of glutamine and ATP through an activated phospho-Asp-tRNA(Asn) or phospho-Glu-tRNA(Gln). The protein is Aspartyl/glutamyl-tRNA(Asn/Gln) amidotransferase subunit C of Rhodopseudomonas palustris (strain TIE-1).